The primary structure comprises 225 residues: PKHD-type hydroxylase Smlt1146 (225 aa).

In terms of domain architecture, Fe2OG dioxygenase spans 78–177; it reads KYLPPRFNRY…RVASFFWVQS (100 aa). Fe cation contacts are provided by histidine 96, aspartate 98, and histidine 158. Residue arginine 168 participates in 2-oxoglutarate binding.

It depends on Fe(2+) as a cofactor. L-ascorbate is required as a cofactor.

This Stenotrophomonas maltophilia (strain K279a) protein is PKHD-type hydroxylase Smlt1146.